Consider the following 419-residue polypeptide: UDP-N-acetylglucosamine 1-carboxyvinyltransferase (419 aa).

22-23 (KN) lines the phosphoenolpyruvate pocket. Arg-93 contributes to the UDP-N-acetyl-alpha-D-glucosamine binding site. Cys-117 serves as the catalytic Proton donor. 2-(S-cysteinyl)pyruvic acid O-phosphothioketal is present on Cys-117. Residues 122 to 126 (RPVDL), Asp-308, and Ile-330 each bind UDP-N-acetyl-alpha-D-glucosamine.

This sequence belongs to the EPSP synthase family. MurA subfamily.

The protein resides in the cytoplasm. It catalyses the reaction phosphoenolpyruvate + UDP-N-acetyl-alpha-D-glucosamine = UDP-N-acetyl-3-O-(1-carboxyvinyl)-alpha-D-glucosamine + phosphate. Its pathway is cell wall biogenesis; peptidoglycan biosynthesis. Functionally, cell wall formation. Adds enolpyruvyl to UDP-N-acetylglucosamine. The sequence is that of UDP-N-acetylglucosamine 1-carboxyvinyltransferase from Pseudomonas putida (Arthrobacter siderocapsulatus).